The following is a 513-amino-acid chain: Maturase K (513 aa).

Belongs to the intron maturase 2 family. MatK subfamily.

It is found in the plastid. Its subcellular location is the chloroplast. Its function is as follows. Usually encoded in the trnK tRNA gene intron. Probably assists in splicing its own and other chloroplast group II introns. The chain is Maturase K from Byblis liniflora (Carnivorous plant).